Consider the following 336-residue polypeptide: Holliday junction branch migration complex subunit RuvB (336 aa).

The large ATPase domain (RuvB-L) stretch occupies residues 4–184; the sequence is ADRLISAGTT…FGIVQRLEFY (181 aa). ATP contacts are provided by residues Ile-23, Arg-24, Gly-65, Lys-68, Thr-69, Thr-70, 131-133, Arg-174, Tyr-184, and Arg-221; that span reads EDY. Thr-69 is a Mg(2+) binding site. Positions 185-255 are small ATPAse domain (RuvB-S); it reads QVPDLQYIVS…IAAQALDMLN (71 aa). Residues 258–336 form a head domain (RuvB-H) region; it reads AEGFDYMDRK…HFGITPPEMP (79 aa). Positions 294, 313, and 318 each coordinate DNA.

Belongs to the RuvB family. In terms of assembly, homohexamer. Forms an RuvA(8)-RuvB(12)-Holliday junction (HJ) complex. HJ DNA is sandwiched between 2 RuvA tetramers; dsDNA enters through RuvA and exits via RuvB. An RuvB hexamer assembles on each DNA strand where it exits the tetramer. Each RuvB hexamer is contacted by two RuvA subunits (via domain III) on 2 adjacent RuvB subunits; this complex drives branch migration. In the full resolvosome a probable DNA-RuvA(4)-RuvB(12)-RuvC(2) complex forms which resolves the HJ.

It localises to the cytoplasm. The enzyme catalyses ATP + H2O = ADP + phosphate + H(+). The RuvA-RuvB-RuvC complex processes Holliday junction (HJ) DNA during genetic recombination and DNA repair, while the RuvA-RuvB complex plays an important role in the rescue of blocked DNA replication forks via replication fork reversal (RFR). RuvA specifically binds to HJ cruciform DNA, conferring on it an open structure. The RuvB hexamer acts as an ATP-dependent pump, pulling dsDNA into and through the RuvAB complex. RuvB forms 2 homohexamers on either side of HJ DNA bound by 1 or 2 RuvA tetramers; 4 subunits per hexamer contact DNA at a time. Coordinated motions by a converter formed by DNA-disengaged RuvB subunits stimulates ATP hydrolysis and nucleotide exchange. Immobilization of the converter enables RuvB to convert the ATP-contained energy into a lever motion, pulling 2 nucleotides of DNA out of the RuvA tetramer per ATP hydrolyzed, thus driving DNA branch migration. The RuvB motors rotate together with the DNA substrate, which together with the progressing nucleotide cycle form the mechanistic basis for DNA recombination by continuous HJ branch migration. Branch migration allows RuvC to scan DNA until it finds its consensus sequence, where it cleaves and resolves cruciform DNA. The chain is Holliday junction branch migration complex subunit RuvB from Escherichia coli O17:K52:H18 (strain UMN026 / ExPEC).